A 513-amino-acid chain; its full sequence is GMP synthase [glutamine-hydrolyzing] (513 aa).

A Glutamine amidotransferase type-1 domain is found at 8 to 198; sequence KIIVLDYGSQ…ALNICGAKGN (191 aa). The active-site Nucleophile is the Cys85. Residues His172 and Glu174 contribute to the active site. The GMPS ATP-PPase domain occupies 199–388; sequence WSMENFIDMQ…LGMPDEIVWR (190 aa). 226 to 232 contacts ATP; that stretch reads SGGVDSS.

In terms of assembly, homodimer.

The catalysed reaction is XMP + L-glutamine + ATP + H2O = GMP + L-glutamate + AMP + diphosphate + 2 H(+). Its pathway is purine metabolism; GMP biosynthesis; GMP from XMP (L-Gln route): step 1/1. Functionally, catalyzes the synthesis of GMP from XMP. This chain is GMP synthase [glutamine-hydrolyzing] (guaA), found in Lactococcus lactis subsp. lactis (strain IL1403) (Streptococcus lactis).